The primary structure comprises 163 residues: NADH-quinone oxidoreductase subunit I (163 aa).

4Fe-4S ferredoxin-type domains follow at residues 53-83 (LRRYPNGEERCIACKLCEAICPALAITIEAG) and 94-123 (TRYDIDMTKCIYCGLCQEACPVDAIVEGPN). Residues Cys-63, Cys-66, Cys-69, Cys-73, Cys-103, Cys-106, Cys-109, and Cys-113 each coordinate [4Fe-4S] cluster.

It belongs to the complex I 23 kDa subunit family. NDH-1 is composed of 14 different subunits. Subunits NuoA, H, J, K, L, M, N constitute the membrane sector of the complex. Requires [4Fe-4S] cluster as cofactor.

The protein resides in the cell inner membrane. The catalysed reaction is a quinone + NADH + 5 H(+)(in) = a quinol + NAD(+) + 4 H(+)(out). In terms of biological role, NDH-1 shuttles electrons from NADH, via FMN and iron-sulfur (Fe-S) centers, to quinones in the respiratory chain. The immediate electron acceptor for the enzyme in this species is believed to be ubiquinone. Couples the redox reaction to proton translocation (for every two electrons transferred, four hydrogen ions are translocated across the cytoplasmic membrane), and thus conserves the redox energy in a proton gradient. The chain is NADH-quinone oxidoreductase subunit I from Parvibaculum lavamentivorans (strain DS-1 / DSM 13023 / NCIMB 13966).